The chain runs to 196 residues: Probable phosphoheptose isomerase (196 aa).

Positions 43-196 constitute an SIS domain; the sequence is IVNVFNSGGK…MICSVIDSYY (154 aa). Position 58-60 (58-60) interacts with substrate; sequence NGG. Zn(2+)-binding residues include His67 and Glu71. Residues Glu71, 100–101, 126–128, Ser131, and Gln178 contribute to the substrate site; these read ND and STS. Gln178 and His186 together coordinate Zn(2+).

The protein belongs to the SIS family. GmhA subfamily. Zn(2+) is required as a cofactor.

It localises to the cytoplasm. It carries out the reaction 2 D-sedoheptulose 7-phosphate = D-glycero-alpha-D-manno-heptose 7-phosphate + D-glycero-beta-D-manno-heptose 7-phosphate. Its pathway is carbohydrate biosynthesis; D-glycero-D-manno-heptose 7-phosphate biosynthesis; D-glycero-alpha-D-manno-heptose 7-phosphate and D-glycero-beta-D-manno-heptose 7-phosphate from sedoheptulose 7-phosphate: step 1/1. Functionally, catalyzes the isomerization of sedoheptulose 7-phosphate in D-glycero-D-manno-heptose 7-phosphate. The sequence is that of Probable phosphoheptose isomerase from Thermoplasma volcanium (strain ATCC 51530 / DSM 4299 / JCM 9571 / NBRC 15438 / GSS1).